The primary structure comprises 557 residues: Iron-sulfur cluster assembly SufBD family protein ABCI8, chloroplastic (557 aa).

Positions 1-47 (MASLLANGISSFSPQPTSDSSKSPKGFHPKPESLKFPSPKSLNPTRP) are disordered. The N-terminal 52 residues, 1-52 (MASLLANGISSFSPQPTSDSSKSPKGFHPKPESLKFPSPKSLNPTRPIFKLR), are a transit peptide targeting the chloroplast. Over residues 10–24 (SSFSPQPTSDSSKSP) the composition is skewed to low complexity.

Belongs to the iron-sulfur cluster assembly SufBD family.

It is found in the plastid. The protein resides in the chloroplast. In terms of biological role, involved in light signaling, probably by mediating the transport and correct distribution of protoporphyrin IX, a chlorophyll precursor, in response to far-red light. In Arabidopsis thaliana (Mouse-ear cress), this protein is Iron-sulfur cluster assembly SufBD family protein ABCI8, chloroplastic (ABCI8).